An 85-amino-acid polypeptide reads, in one-letter code: U4-theraphotoxin-Hhn1a (85 aa).

The signal sequence occupies residues 1–22 (MKVTLISILTCAAVLVLHTTAA). Positions 23 to 48 (EELEAESQLMEVGMPDTELAAVDEER) are excised as a propeptide. Intrachain disulfides connect Cys-52–Cys-66, Cys-56–Cys-77, and Cys-71–Cys-82.

This sequence belongs to the neurotoxin 12 (Hwtx-2) family. 02 (Hwtx-2) subfamily. Monomer. Expressed by the venom gland.

The protein localises to the secreted. Neurotoxin active on both insects and mammals. This chain is U4-theraphotoxin-Hhn1a, found in Cyriopagopus hainanus (Chinese bird spider).